Reading from the N-terminus, the 307-residue chain is Small ribosomal subunit biogenesis GTPase RsgA (307 aa).

Residues 1 to 20 form a disordered region; that stretch reads MPSEHPFSDGISTPNPKETM. Residues 10–20 are compositionally biased toward polar residues; it reads GISTPNPKETM. The CP-type G domain maps to 85–242; that stretch reads RQDAWKTKLI…LIDSPGLQEF (158 aa). Residues 135–138 and 184–192 each bind GTP; these read NKAD and GQSGMGKST. Zn(2+) contacts are provided by Cys-266, Cys-271, His-273, and Cys-279.

Belongs to the TRAFAC class YlqF/YawG GTPase family. RsgA subfamily. In terms of assembly, monomer. Associates with 30S ribosomal subunit, binds 16S rRNA. Zn(2+) serves as cofactor.

Its subcellular location is the cytoplasm. Functionally, one of several proteins that assist in the late maturation steps of the functional core of the 30S ribosomal subunit. Helps release RbfA from mature subunits. May play a role in the assembly of ribosomal proteins into the subunit. Circularly permuted GTPase that catalyzes slow GTP hydrolysis, GTPase activity is stimulated by the 30S ribosomal subunit. In Neisseria meningitidis serogroup A / serotype 4A (strain DSM 15465 / Z2491), this protein is Small ribosomal subunit biogenesis GTPase RsgA.